Consider the following 475-residue polypeptide: Serralysin G (475 aa).

Residues 1 to 14 constitute a propeptide that is removed on maturation; the sequence is MALYGKKTDLSSAS. Residue histidine 186 coordinates Zn(2+). Glutamate 187 is an active-site residue. Positions 190 and 226 each coordinate Zn(2+). Residues arginine 261, glycine 263, threonine 265, aspartate 293, glycine 295, glycine 296, aspartate 298, glutamate 337, glycine 342, glycine 344, aspartate 346, asparagine 351, asparagine 355, glycine 359, glycine 360, alanine 361, glycine 362, aspartate 364, glycine 368, glycine 370, glycine 371, aspartate 373, glycine 377, glycine 378, alanine 379, glycine 380, aspartate 382, aspartate 391, aspartate 398, and aspartate 408 each contribute to the Ca(2+) site. 2 Hemolysin-type calcium-binding repeats span residues 340 to 357 and 358 to 375; these read IGGS…DNRI and DGGA…ADIL.

The protein belongs to the peptidase M10B family. It depends on Ca(2+) as a cofactor. The cofactor is Zn(2+).

Its subcellular location is the secreted. The enzyme catalyses Preferential cleavage of bonds with hydrophobic residues in P1'.. The sequence is that of Serralysin G (prtG) from Dickeya chrysanthemi (Pectobacterium chrysanthemi).